The primary structure comprises 296 residues: Homoserine kinase (296 aa).

Residue 92–102 coordinates ATP; sequence PQSRGLGSSAA.

This sequence belongs to the GHMP kinase family. Homoserine kinase subfamily.

Its subcellular location is the cytoplasm. It catalyses the reaction L-homoserine + ATP = O-phospho-L-homoserine + ADP + H(+). It functions in the pathway amino-acid biosynthesis; L-threonine biosynthesis; L-threonine from L-aspartate: step 4/5. Its function is as follows. Catalyzes the ATP-dependent phosphorylation of L-homoserine to L-homoserine phosphate. This Cutibacterium acnes (strain DSM 16379 / KPA171202) (Propionibacterium acnes) protein is Homoserine kinase.